The following is a 334-amino-acid chain: Phosphoribosylformylglycinamidine cyclo-ligase (334 aa).

Belongs to the AIR synthase family.

It is found in the cytoplasm. It carries out the reaction 2-formamido-N(1)-(5-O-phospho-beta-D-ribosyl)acetamidine + ATP = 5-amino-1-(5-phospho-beta-D-ribosyl)imidazole + ADP + phosphate + H(+). It participates in purine metabolism; IMP biosynthesis via de novo pathway; 5-amino-1-(5-phospho-D-ribosyl)imidazole from N(2)-formyl-N(1)-(5-phospho-D-ribosyl)glycinamide: step 2/2. This is Phosphoribosylformylglycinamidine cyclo-ligase from Pyrococcus abyssi (strain GE5 / Orsay).